A 239-amino-acid chain; its full sequence is Caffeoyl-CoA O-methyltransferase 1 (239 aa).

K13 serves as a coordination point for substrate. S-adenosyl-L-methionine contacts are provided by residues T55, E77, 79 to 80 (GV), S85, D103, and A132. D155 is a binding site for substrate. An a divalent metal cation-binding site is contributed by D155. D157 contributes to the S-adenosyl-L-methionine binding site. Residues D181 and N182 each coordinate a divalent metal cation. N186 contributes to the substrate binding site.

The protein belongs to the class I-like SAM-binding methyltransferase superfamily. Cation-dependent O-methyltransferase family. CCoAMT subfamily. As to quaternary structure, monomer. Mg(2+) serves as cofactor. As to expression, mostly expressed in the bottom and middle parts of the stems.

The enzyme catalyses (E)-caffeoyl-CoA + S-adenosyl-L-methionine = (E)-feruloyl-CoA + S-adenosyl-L-homocysteine + H(+). It functions in the pathway aromatic compound metabolism; phenylpropanoid biosynthesis. In terms of biological role, methylates caffeoyl-CoA to feruloyl-CoA and 5-hydroxyferuloyl-CoA to sinapoyl-CoA. Plays a role in the synthesis of feruloylated polysaccharides. Involved in the reinforcement of the plant cell wall. Also involved in the responding to wounding or pathogen challenge by the increased formation of cell wall-bound ferulic acid polymers. The chain is Caffeoyl-CoA O-methyltransferase 1 (CCOAOMT1) from Nicotiana tabacum (Common tobacco).